Here is a 59-residue protein sequence, read N- to C-terminus: Sec-independent protein translocase protein TatA (59 aa).

The chain crosses the membrane as a helical span at residues 1-21; that stretch reads MGRLGLTEILVIVGIVILLFG.

This sequence belongs to the TatA/E family. Forms a complex with TatC.

It localises to the cell inner membrane. Its function is as follows. Part of the twin-arginine translocation (Tat) system that transports large folded proteins containing a characteristic twin-arginine motif in their signal peptide across membranes. TatA could form the protein-conducting channel of the Tat system. This chain is Sec-independent protein translocase protein TatA, found in Flavobacterium johnsoniae (strain ATCC 17061 / DSM 2064 / JCM 8514 / BCRC 14874 / CCUG 350202 / NBRC 14942 / NCIMB 11054 / UW101) (Cytophaga johnsonae).